Reading from the N-terminus, the 117-residue chain is Prefoldin subunit beta (117 aa).

The protein belongs to the prefoldin subunit beta family. Heterohexamer of two alpha and four beta subunits.

It localises to the cytoplasm. In terms of biological role, molecular chaperone capable of stabilizing a range of proteins. Seems to fulfill an ATP-independent, HSP70-like function in archaeal de novo protein folding. The sequence is that of Prefoldin subunit beta (pfdB) from Methanosarcina acetivorans (strain ATCC 35395 / DSM 2834 / JCM 12185 / C2A).